The following is a 49-amino-acid chain: MAKRKANHVIPGMNAAKAQGMGAGYNEKFSNEPLTEAQRQNNKKRKKNQ.

Residues 23–49 form a disordered region; it reads AGYNEKFSNEPLTEAQRQNNKKRKKNQ.

It belongs to the SspO family.

It is found in the spore core. The sequence is that of Small, acid-soluble spore protein O from Geobacillus thermodenitrificans (strain NG80-2).